A 643-amino-acid polypeptide reads, in one-letter code: Major core protein OPG129 (643 aa).

Residues 1 to 61 (MEAVVNSDVF…IVDDDFISAG (61 aa)) constitute a propeptide that is removed on maturation.

The protein belongs to the orthopoxvirus OPG129 family. Post-translationally, the 73-kDa precursor is cleaved to a mature protein of 60 kDa during virion maturation. Proteolytic cleavage of major core proteins OPG129, OPG136, and OPG098, which occurs at a late stage of core formation, is required for production of infectious mature virions (MV).

It localises to the virion. In terms of biological role, major component of the virion core that undergoes proteolytic processing during the immature virion (IV) to mature virion (MV) transition. Essential for the formation of a structurally normal core. The sequence is that of Major core protein OPG129 (OPG129) from Vaccinia virus (strain Western Reserve) (VACV).